The chain runs to 295 residues: sn-glycerol-3-phosphate transport system permease protein UgpA (295 aa).

Residues Met1–Arg11 are Cytoplasmic-facing. A helical transmembrane segment spans residues Trp12 to Pro32. Topologically, residues Ala33–Thr80 are periplasmic. The region spanning Ile76 to Gln284 is the ABC transmembrane type-1 domain. The helical transmembrane segment at Phe81–Val101 threads the bilayer. Topologically, residues Arg102–Thr109 are cytoplasmic. The helical transmembrane segment at Leu110–Phe130 threads the bilayer. Residues Asn131–Gln156 are Periplasmic-facing. Residues Ala157–Phe177 form a helical membrane-spanning segment. Over Tyr178 to Ala207 the chain is Cytoplasmic. Residues Leu208–Phe228 form a helical membrane-spanning segment. Residues Asp229–Asp262 are Periplasmic-facing. Residues Leu263 to Val283 form a helical membrane-spanning segment. Topologically, residues Gln284 to Gln295 are cytoplasmic.

The protein belongs to the binding-protein-dependent transport system permease family. UgpAE subfamily. The complex is composed of two ATP-binding proteins (UgpC), two transmembrane proteins (UgpA and UgpE) and a solute-binding protein (UgpB).

It localises to the cell inner membrane. Part of the ABC transporter complex UgpBAEC involved in sn-glycerol-3-phosphate (G3P) import. Probably responsible for the translocation of the substrate across the membrane. The chain is sn-glycerol-3-phosphate transport system permease protein UgpA (ugpA) from Shigella flexneri.